A 273-amino-acid chain; its full sequence is N-alpha-acetyltransferase 30 (273 aa).

Disordered stretches follow at residues 1 to 39 (MADA…HQLN) and 62 to 85 (QKTR…PNGL). The N-acetyltransferase domain maps to 125–273 (RYVRYESELQ…DALRLKLWLR (149 aa)).

It belongs to the acetyltransferase family. MAK3 subfamily. In terms of assembly, component of the N-terminal acetyltransferase C (NatC) complex.

It localises to the cytoplasm. The protein localises to the nucleus. It catalyses the reaction N-terminal L-methionyl-L-leucyl-[protein] + acetyl-CoA = N-terminal N(alpha)-acetyl-L-methionyl-L-leucyl-[protein] + CoA + H(+). The catalysed reaction is N-terminal L-methionyl-L-isoleucyl-[protein] + acetyl-CoA = N-terminal N(alpha)-acetyl-L-methionyl-L-isoleucyl-[protein] + CoA + H(+). It carries out the reaction N-terminal L-methionyl-L-phenylalanyl-[protein] + acetyl-CoA = N-terminal N(alpha)-acetyl-L-methionyl-L-phenylalanyl-[protein] + CoA + H(+). The enzyme catalyses N-terminal L-methionyl-L-tryptophyl-[protein] + acetyl-CoA = N-terminal N(alpha)-acetyl-L-methionyl-L-tryptophyl-[protein] + CoA + H(+). It catalyses the reaction N-terminal L-methionyl-L-tyrosyl-[protein] + acetyl-CoA = N-terminal N(alpha)-acetyl-L-methionyl-L-tyrosyl-[protein] + CoA + H(+). In terms of biological role, catalytic subunit of the N-terminal acetyltransferase C (NatC) complex. Catalyzes acetylation of the N-terminal methionine residues of peptides beginning with Met-Leu-Ala and Met-Leu-Gly. N-terminal acetylation protects proteins from ubiquitination and degradation by the N-end rule pathway. The protein is N-alpha-acetyltransferase 30 (naa30) of Xenopus laevis (African clawed frog).